A 637-amino-acid polypeptide reads, in one-letter code: Transcription factor PHYTOCHROME INTERACTING FACTOR-LIKE 15 (637 aa).

Gly residues predominate over residues 35 to 46 (FFGGTGGGGGGS). 3 disordered regions span residues 35–54 (FFGG…QERQ), 146–213 (ASLP…EGVM), and 356–397 (ECSA…RRRR). Residues 149-170 (PASNHNGATNNRNAPVATTTTR) are compositionally biased toward polar residues. A basic motif region spans residues 384–397 (RTAEVHNLSERRRR). The segment covering 384 to 397 (RTAEVHNLSERRRR) has biased composition (basic and acidic residues). In terms of domain architecture, bHLH spans 384–433 (RTAEVHNLSERRRRDRINEKMRALQELIPNCNKIDKASMLDEAIEYLKTL). Residues 398–433 (DRINEKMRALQELIPNCNKIDKASMLDEAIEYLKTL) are helix-loop-helix motif. The interval 601–637 (GDNENFRIPSSAQTKSSQFSDGTGKGTNARERDGAET) is disordered. Positions 608–621 (IPSSAQTKSSQFSD) are enriched in polar residues. Basic and acidic residues predominate over residues 628 to 637 (NARERDGAET).

The protein belongs to the bHLH protein family. In terms of assembly, interacts with LF and PRR1.

Its subcellular location is the nucleus. Its function is as follows. Transcription factor that may act as negative regulator of phyB-dependent light signal transduction. This Oryza sativa subsp. japonica (Rice) protein is Transcription factor PHYTOCHROME INTERACTING FACTOR-LIKE 15.